The following is a 292-amino-acid chain: 2-(5''-triphosphoribosyl)-3'-dephosphocoenzyme-A synthase (292 aa).

It belongs to the CitG/MdcB family.

The enzyme catalyses 3'-dephospho-CoA + ATP = 2'-(5''-triphospho-alpha-D-ribosyl)-3'-dephospho-CoA + adenine. Its function is as follows. Catalyzes the formation of 2-(5''-triphosphoribosyl)-3'-dephosphocoenzyme-A, the precursor of the prosthetic group of the holo-acyl carrier protein (gamma chain) of citrate lyase, from ATP and dephospho-CoA. This chain is 2-(5''-triphosphoribosyl)-3'-dephosphocoenzyme-A synthase, found in Escherichia coli O127:H6 (strain E2348/69 / EPEC).